The following is a 423-amino-acid chain: Gamma-glutamyl phosphate reductase (423 aa).

This sequence belongs to the gamma-glutamyl phosphate reductase family.

It localises to the cytoplasm. The catalysed reaction is L-glutamate 5-semialdehyde + phosphate + NADP(+) = L-glutamyl 5-phosphate + NADPH + H(+). It functions in the pathway amino-acid biosynthesis; L-proline biosynthesis; L-glutamate 5-semialdehyde from L-glutamate: step 2/2. In terms of biological role, catalyzes the NADPH-dependent reduction of L-glutamate 5-phosphate into L-glutamate 5-semialdehyde and phosphate. The product spontaneously undergoes cyclization to form 1-pyrroline-5-carboxylate. The polypeptide is Gamma-glutamyl phosphate reductase (Paraburkholderia phymatum (strain DSM 17167 / CIP 108236 / LMG 21445 / STM815) (Burkholderia phymatum)).